The primary structure comprises 245 residues: Biosynthetic peptidoglycan transglycosylase (245 aa).

A helical transmembrane segment spans residues 19–41 (CLRWVLAAPLLFAAASVLQVLFL).

This sequence belongs to the glycosyltransferase 51 family.

It is found in the cell inner membrane. The catalysed reaction is [GlcNAc-(1-&gt;4)-Mur2Ac(oyl-L-Ala-gamma-D-Glu-L-Lys-D-Ala-D-Ala)](n)-di-trans,octa-cis-undecaprenyl diphosphate + beta-D-GlcNAc-(1-&gt;4)-Mur2Ac(oyl-L-Ala-gamma-D-Glu-L-Lys-D-Ala-D-Ala)-di-trans,octa-cis-undecaprenyl diphosphate = [GlcNAc-(1-&gt;4)-Mur2Ac(oyl-L-Ala-gamma-D-Glu-L-Lys-D-Ala-D-Ala)](n+1)-di-trans,octa-cis-undecaprenyl diphosphate + di-trans,octa-cis-undecaprenyl diphosphate + H(+). It functions in the pathway cell wall biogenesis; peptidoglycan biosynthesis. Peptidoglycan polymerase that catalyzes glycan chain elongation from lipid-linked precursors. The chain is Biosynthetic peptidoglycan transglycosylase from Xanthomonas oryzae pv. oryzae (strain KACC10331 / KXO85).